The chain runs to 153 residues: Transcription antitermination protein NusB (153 aa).

The protein belongs to the NusB family.

In terms of biological role, involved in transcription antitermination. Required for transcription of ribosomal RNA (rRNA) genes. Binds specifically to the boxA antiterminator sequence of the ribosomal RNA (rrn) operons. The polypeptide is Transcription antitermination protein NusB (Clostridium tetani (strain Massachusetts / E88)).